We begin with the raw amino-acid sequence, 485 residues long: NADH-quinone oxidoreductase subunit N (485 aa).

Helical transmembrane passes span 8–28 (LIAL…MLSI), 35–55 (FLNA…LWFV), 75–95 (LYTG…YPWL), 105–125 (FYLL…ANHL), 127–147 (ALFL…GYAF), 159–179 (YTIL…LVYA), 203–223 (LLAG…LVPF), 235–255 (PAPV…GVVM), 271–291 (VVLG…ALSQ), 297–317 (LLGY…IALQ), 326–346 (VGVY…VVSL), 374–394 (AVMT…GFIG), 408–430 (WWLV…RVAV), and 455–475 (IVVL…QPLI).

This sequence belongs to the complex I subunit 2 family. As to quaternary structure, NDH-1 is composed of 13 different subunits. Subunits NuoA, H, J, K, L, M, N constitute the membrane sector of the complex.

The protein resides in the cell inner membrane. The catalysed reaction is a quinone + NADH + 5 H(+)(in) = a quinol + NAD(+) + 4 H(+)(out). Functionally, NDH-1 shuttles electrons from NADH, via FMN and iron-sulfur (Fe-S) centers, to quinones in the respiratory chain. The immediate electron acceptor for the enzyme in this species is believed to be ubiquinone. Couples the redox reaction to proton translocation (for every two electrons transferred, four hydrogen ions are translocated across the cytoplasmic membrane), and thus conserves the redox energy in a proton gradient. The chain is NADH-quinone oxidoreductase subunit N from Klebsiella pneumoniae subsp. pneumoniae (strain ATCC 700721 / MGH 78578).